The following is a 151-amino-acid chain: D-aminoacyl-tRNA deacylase (151 aa).

Residues 137–138 carry the Gly-cisPro motif, important for rejection of L-amino acids motif; sequence GP.

It belongs to the DTD family. As to quaternary structure, homodimer.

Its subcellular location is the cytoplasm. The catalysed reaction is glycyl-tRNA(Ala) + H2O = tRNA(Ala) + glycine + H(+). It catalyses the reaction a D-aminoacyl-tRNA + H2O = a tRNA + a D-alpha-amino acid + H(+). Its function is as follows. An aminoacyl-tRNA editing enzyme that deacylates mischarged D-aminoacyl-tRNAs. Also deacylates mischarged glycyl-tRNA(Ala), protecting cells against glycine mischarging by AlaRS. Acts via tRNA-based rather than protein-based catalysis; rejects L-amino acids rather than detecting D-amino acids in the active site. By recycling D-aminoacyl-tRNA to D-amino acids and free tRNA molecules, this enzyme counteracts the toxicity associated with the formation of D-aminoacyl-tRNA entities in vivo and helps enforce protein L-homochirality. This chain is D-aminoacyl-tRNA deacylase, found in Geobacter metallireducens (strain ATCC 53774 / DSM 7210 / GS-15).